The chain runs to 250 residues: Hydroxyacylglutathione hydrolase (250 aa).

Zn(2+)-binding residues include H52, H54, D56, H57, H107, D128, and H166.

It belongs to the metallo-beta-lactamase superfamily. Glyoxalase II family. As to quaternary structure, monomer. The cofactor is Zn(2+).

It catalyses the reaction an S-(2-hydroxyacyl)glutathione + H2O = a 2-hydroxy carboxylate + glutathione + H(+). Its pathway is secondary metabolite metabolism; methylglyoxal degradation; (R)-lactate from methylglyoxal: step 2/2. Its function is as follows. Thiolesterase that catalyzes the hydrolysis of S-D-lactoyl-glutathione to form glutathione and D-lactic acid. The sequence is that of Hydroxyacylglutathione hydrolase from Neisseria gonorrhoeae (strain ATCC 700825 / FA 1090).